The following is a 384-amino-acid chain: 8-amino-7-oxononanoate synthase (384 aa).

A substrate-binding site is contributed by Arg-21. Residue 108–109 coordinates pyridoxal 5'-phosphate; it reads GF. Substrate is bound at residue His-133. Positions 179, 207, and 233 each coordinate pyridoxal 5'-phosphate. An N6-(pyridoxal phosphate)lysine modification is found at Lys-236. Thr-352 is a substrate binding site.

This sequence belongs to the class-II pyridoxal-phosphate-dependent aminotransferase family. BioF subfamily. As to quaternary structure, homodimer. Pyridoxal 5'-phosphate is required as a cofactor.

It catalyses the reaction 6-carboxyhexanoyl-[ACP] + L-alanine + H(+) = (8S)-8-amino-7-oxononanoate + holo-[ACP] + CO2. Its pathway is cofactor biosynthesis; biotin biosynthesis. Functionally, catalyzes the decarboxylative condensation of pimeloyl-[acyl-carrier protein] and L-alanine to produce 8-amino-7-oxononanoate (AON), [acyl-carrier protein], and carbon dioxide. This Escherichia fergusonii (strain ATCC 35469 / DSM 13698 / CCUG 18766 / IAM 14443 / JCM 21226 / LMG 7866 / NBRC 102419 / NCTC 12128 / CDC 0568-73) protein is 8-amino-7-oxononanoate synthase.